We begin with the raw amino-acid sequence, 471 residues long: Probable ribonuclease FAU-1 (471 aa).

Belongs to the FAU-1 family.

Functionally, probable RNase involved in rRNA stability through maturation and/or degradation of precursor rRNAs. Preferentially cleaves UA sequences in the 5' precursor region of 5S rRNA. Binds to RNA in loop regions with AU-rich sequences. The protein is Probable ribonuclease FAU-1 of Thermococcus kodakarensis (strain ATCC BAA-918 / JCM 12380 / KOD1) (Pyrococcus kodakaraensis (strain KOD1)).